A 483-amino-acid chain; its full sequence is Isocitrate dehydrogenase [NADP] (483 aa).

An NADP(+)-binding site is contributed by threonine 74. 5 residues coordinate D-threo-isocitrate: serine 83, asparagine 85, arginine 89, arginine 99, and arginine 121. Aspartate 232 serves as a coordination point for Mg(2+). NADP(+) contacts are provided by residues 264-270 and asparagine 277; that span reads HGSAPDI.

It belongs to the isocitrate and isopropylmalate dehydrogenases family. As to quaternary structure, homodimer. It depends on Mg(2+) as a cofactor. Mn(2+) is required as a cofactor.

The enzyme catalyses D-threo-isocitrate + NADP(+) = 2-oxoglutarate + CO2 + NADPH. In terms of biological role, catalyzes the oxidative decarboxylation of isocitrate to 2-oxoglutarate and carbon dioxide with the concomitant reduction of NADP(+). In Rickettsia bellii (strain RML369-C), this protein is Isocitrate dehydrogenase [NADP] (icd).